The sequence spans 356 residues: Delta(7)-sterol 5(6)-desaturase (356 aa).

3 helical membrane passes run 87–107 (LTLY…FAGL), 134–154 (QANI…LAEV), and 171–191 (WYDY…IYWI). The region spanning 179–303 (FFIAFTDLCI…FTTLWDRLGG (125 aa)) is the Fatty acid hydroxylase domain. Positions 192 to 196 (HRGLH) match the Histidine box-1 motif. The Histidine box-2 motif lies at 205 to 209 (HKPHH). The helical transmembrane segment at 235–255 (YIFPFLFPLSKIASVAFFVFV) threads the bilayer. The Histidine box-3 signature appears at 280–284 (HTMHH).

The protein belongs to the sterol desaturase family. Requires Fe cation as cofactor.

The protein localises to the endoplasmic reticulum membrane. It carries out the reaction a Delta(7)-sterol + 2 Fe(II)-[cytochrome b5] + O2 + 2 H(+) = a Delta(5),Delta(7)-sterol + 2 Fe(III)-[cytochrome b5] + 2 H2O. Its pathway is steroid metabolism; ergosterol biosynthesis; ergosterol from zymosterol: step 3/5. Catalyzes the introduction of a C-5 double bond in the B ring of ergosterol. May contribute to the regulation of ergosterol biosynthesis. The sequence is that of Delta(7)-sterol 5(6)-desaturase (ERG3) from Leptosphaeria maculans (Blackleg fungus).